Consider the following 157-residue polypeptide: Recombination endonuclease VII (157 aa).

Cys23 and Cys26 together coordinate Zn(2+). Asp40 is a binding site for Ca(2+). Zn(2+) contacts are provided by Cys58 and Cys61. Asn62 serves as a coordination point for Ca(2+).

Homodimer. Ca(2+) serves as cofactor. Requires Zn(2+) as cofactor.

In terms of biological role, cleaves DNA cruciform and Y-structures as well as heteroduplex loops. Resolves Holliday junctions, recognizes a broad spectrum of DNA substrates ranging from branched DNAs to single base mismatches. The sequence is that of Recombination endonuclease VII (49) from Enterobacteria phage T4 (Bacteriophage T4).